The primary structure comprises 236 residues: (5-formylfuran-3-yl)methyl phosphate synthase (236 aa).

Residue lysine 27 is the Schiff-base intermediate with substrate of the active site. Catalysis depends on lysine 85, which acts as the Proton acceptor.

The protein belongs to the MfnB family.

It catalyses the reaction 2 D-glyceraldehyde 3-phosphate = 4-(hydroxymethyl)-2-furancarboxaldehyde phosphate + phosphate + 2 H2O. The protein operates within cofactor biosynthesis; methanofuran biosynthesis. Catalyzes the formation of 4-(hydroxymethyl)-2-furancarboxaldehyde phosphate (4-HFC-P) from two molecules of glyceraldehyde-3-P (GA-3-P). The polypeptide is (5-formylfuran-3-yl)methyl phosphate synthase (Methanococcus maripaludis (strain C5 / ATCC BAA-1333)).